A 388-amino-acid polypeptide reads, in one-letter code: Formate-dependent phosphoribosylglycinamide formyltransferase (388 aa).

Residues 11–12 (EL) and E71 each bind N(1)-(5-phospho-beta-D-ribosyl)glycinamide. ATP-binding positions include R103, K144, 149–154 (SSGKGQ), 184–187 (EEFI), and E192. Residues 108–300 (DLAAKELGLK…EFELHLRAVL (193 aa)) form the ATP-grasp domain. Positions 257 and 270 each coordinate Mg(2+). N(1)-(5-phospho-beta-D-ribosyl)glycinamide-binding positions include D277, K349, and 356–357 (RR).

Belongs to the PurK/PurT family. Homodimer.

The enzyme catalyses N(1)-(5-phospho-beta-D-ribosyl)glycinamide + formate + ATP = N(2)-formyl-N(1)-(5-phospho-beta-D-ribosyl)glycinamide + ADP + phosphate + H(+). It functions in the pathway purine metabolism; IMP biosynthesis via de novo pathway; N(2)-formyl-N(1)-(5-phospho-D-ribosyl)glycinamide from N(1)-(5-phospho-D-ribosyl)glycinamide (formate route): step 1/1. Involved in the de novo purine biosynthesis. Catalyzes the transfer of formate to 5-phospho-ribosyl-glycinamide (GAR), producing 5-phospho-ribosyl-N-formylglycinamide (FGAR). Formate is provided by PurU via hydrolysis of 10-formyl-tetrahydrofolate. This is Formate-dependent phosphoribosylglycinamide formyltransferase from Bacteroides thetaiotaomicron (strain ATCC 29148 / DSM 2079 / JCM 5827 / CCUG 10774 / NCTC 10582 / VPI-5482 / E50).